The primary structure comprises 1032 residues: uncharacterized protein (1032 aa).

3 disordered regions span residues 54 to 80, 391 to 451, and 884 to 934; these read NNNN…NNNN, QLQI…QTHL, and INNE…SKVK. Over residues 884 to 907 the composition is skewed to low complexity; it reads INNENNNENNNNYNGNINSNNNNN.

This is an uncharacterized protein from Dictyostelium discoideum (Social amoeba).